A 388-amino-acid polypeptide reads, in one-letter code: F-box/kelch-repeat protein At3g17530 (388 aa).

Residues 1–50 enclose the F-box domain; it reads MMISDLPHDLESEILSRVPAKSLAKWKTTCKRWYALFRDPSFVKKNFDKA. Kelch repeat units follow at residues 163–208 and 336–383; these read CCYY…VSLK and RIYI…AEEN.

This is F-box/kelch-repeat protein At3g17530 from Arabidopsis thaliana (Mouse-ear cress).